Here is a 1169-residue protein sequence, read N- to C-terminus: Translation initiation factor IF-2 (1169 aa).

2 disordered regions span residues 69–108 and 139–568; these read IKAKNENPKNNDNKNNKNFSNPSHPEKLSKEGLNKKPLLI and ALSK…LRAA. 2 stretches are compositionally biased toward basic and acidic residues: residues 71–83 and 92–102; these read AKNENPKNNDNKN and HPEKLSKEGLN. Residues 139–156 show a composition bias toward polar residues; that stretch reads ALSKNQNKTNTSVITTPN. Residues 157–171 show a composition bias toward basic and acidic residues; sequence LKDKKNPSALQDKKP. Low complexity predominate over residues 196-214; it reads NLANSNRNINANKINNSVN. Residues 231-248 show a composition bias toward polar residues; the sequence is ADNNNFPKKNLNSPNVKS. The span at 265–281 shows a compositional bias: low complexity; the sequence is NTNRPNSNSRQPSSNTQ. Composition is skewed to polar residues over residues 282–294, 412–432, and 439–455; these read ISANRPGGQNRQG, MQLQKTNASNKEKPNISNVNK, and NQKTKAPNSRLNTSPSP. The span at 472–486 shows a compositional bias: basic and acidic residues; sequence GRTDWDDSAKLEALR. Over residues 544–560 the composition is skewed to basic residues; that stretch reads KQFKKKKKETTRQRQKR. Residues 661–838 form the tr-type G domain; sequence KRPPVITVMG…EVEDLQANPE (178 aa). The G1 stretch occupies residues 670–677; it reads GHVDHGKT. Position 670–677 (670–677) interacts with GTP; that stretch reads GHVDHGKT. A G2 region spans residues 695 to 699; sequence GITQH. A G3 region spans residues 720-723; it reads DTPG. Residues 720-724 and 774-777 each bind GTP; these read DTPGH and NKID. The interval 774–777 is G4; it reads NKID. The interval 810–812 is G5; sequence SAI.

The protein belongs to the TRAFAC class translation factor GTPase superfamily. Classic translation factor GTPase family. IF-2 subfamily.

Its subcellular location is the cytoplasm. Functionally, one of the essential components for the initiation of protein synthesis. Protects formylmethionyl-tRNA from spontaneous hydrolysis and promotes its binding to the 30S ribosomal subunits. Also involved in the hydrolysis of GTP during the formation of the 70S ribosomal complex. The sequence is that of Translation initiation factor IF-2 from Prochlorococcus marinus subsp. pastoris (strain CCMP1986 / NIES-2087 / MED4).